The chain runs to 154 residues: CASP-like protein 5C2 (154 aa).

Over 1–17 the chain is Cytoplasmic; that stretch reads MEHVPGSFGTSASFALR. A helical membrane pass occupies residues 18 to 38; the sequence is FGQTIFSAASLIFMCFDFDFY. The Extracellular segment spans residues 39-41; it reads DFT. Residues 42–62 form a helical membrane-spanning segment; sequence TFCYLAMVMAIVTPWSILLAL. Residues 63 to 81 lie on the Cytoplasmic side of the membrane; it reads TDTYSVLVKLLPQELRVLS. The helical transmembrane segment at 82-102 threads the bilayer; sequence IVFAGDFVLSFLSLGGACAVA. Residues 103 to 128 lie on the Extracellular side of the membrane; that stretch reads SATELLASADGKICDGSLCIQYQVSA. A helical membrane pass occupies residues 129–149; sequence ALAFLCWFLLLASALFNFWSL. Topologically, residues 150 to 154 are cytoplasmic; that stretch reads PSLYY.

It belongs to the Casparian strip membrane proteins (CASP) family. As to quaternary structure, homodimer and heterodimers.

Its subcellular location is the cell membrane. The protein is CASP-like protein 5C2 of Arabidopsis thaliana (Mouse-ear cress).